The chain runs to 130 residues: Small ribosomal subunit protein uS11c (130 aa).

It belongs to the universal ribosomal protein uS11 family. In terms of assembly, part of the 30S ribosomal subunit.

It is found in the plastid. Its subcellular location is the chloroplast. In Pinus thunbergii (Japanese black pine), this protein is Small ribosomal subunit protein uS11c.